Consider the following 413-residue polypeptide: Probable short/branched chain specific acyl-CoA dehydrogenase (413 aa).

Residues 152-161 (FCLSESGSGS) and 186-188 (WIT) each bind FAD. Substrate is bound at residue S161. Substrate is bound by residues Y208, Y262, and 270–273 (NEGR). FAD-binding positions include R298, Q309, and 366–370 (SMLGG). The active-site Proton acceptor is the E393. Position 395 to 397 (395 to 397 (TSN)) interacts with FAD.

The protein belongs to the acyl-CoA dehydrogenase family. As to quaternary structure, homotetramer. The cofactor is FAD.

It carries out the reaction 2-methylbutanoyl-CoA + oxidized [electron-transfer flavoprotein] + H(+) = (2E)-2-methylbut-2-enoyl-CoA + reduced [electron-transfer flavoprotein]. The protein operates within lipid metabolism; mitochondrial fatty acid beta-oxidation. It participates in amino-acid degradation; L-isoleucine degradation. Probable short and branched chain specific acyl-CoA dehydrogenase that catalyzes the removal of one hydrogen from C-2 and C-3 of the fatty acyl-CoA thioester, resulting in the formation of trans-2-enoyl-CoA. The sequence is that of Probable short/branched chain specific acyl-CoA dehydrogenase (acadsb) from Dictyostelium discoideum (Social amoeba).